Consider the following 275-residue polypeptide: Adenylate kinase (275 aa).

54-59 (GAGKGT) is a binding site for ATP. The tract at residues 74-103 (ATGDMLRSQVAKKTPLGREAKKIMDQGGLV) is NMP. Residues threonine 75, arginine 80, 101-103 (GLV), 130-133 (GFPR), and glutamine 137 contribute to the AMP site. Positions 171-208 (GRLVHPASGRSYHRVFNPPKAEMKDDITGEPLVSRSDD) are LID. Residues arginine 172 and 181–182 (SY) each bind ATP. AMP contacts are provided by arginine 205 and arginine 216. Glutamine 244 lines the ATP pocket.

The protein belongs to the adenylate kinase family. AK2 subfamily. In terms of assembly, monomer.

Its subcellular location is the cytoplasm. It localises to the cytosol. It is found in the mitochondrion intermembrane space. The catalysed reaction is AMP + ATP = 2 ADP. In terms of biological role, catalyzes the reversible transfer of the terminal phosphate group between ATP and AMP. Plays an important role in cellular energy homeostasis and in adenine nucleotide metabolism. Adenylate kinase activity is critical for regulation of the phosphate utilization and the AMP de novo biosynthesis pathways. The chain is Adenylate kinase (adk1) from Sclerotinia sclerotiorum (strain ATCC 18683 / 1980 / Ss-1) (White mold).